Consider the following 372-residue polypeptide: Small ribosomal subunit protein mS77 (rPPR2) (372 aa).

The transit peptide at 1 to 28 (MKSFLLSRQAIHRISLLSSKTPTFCRNF) directs the protein to the mitochondrion. Residues 240–265 (DNSIRESETVDGEVEEEGFVPSDEVE) are disordered. A compositionally biased stretch (acidic residues) spans 248-257 (TVDGEVEEEG).

Component of the mitochondrial ribosome small subunit.

It is found in the mitochondrion. In terms of biological role, required for karyogamy during female gametophyte development, when the two polar nuclei fuse to form the diploid central cell nucleus. This Arabidopsis thaliana (Mouse-ear cress) protein is Small ribosomal subunit protein mS77 (rPPR2).